The sequence spans 299 residues: Protease HtpX homolog (299 aa).

2 helical membrane passes run 15–35 and 39–59; these read ILLLVFFLLLALVGYAVGYLF and GLGGLVIALIIGFIYALSMIF. His143 is a Zn(2+) binding site. The active site involves Glu144. Zn(2+) is bound at residue His147. 2 consecutive transmembrane segments (helical) span residues 158-178 and 198-218; these read IAVALASAITMLSSMAGRMMW and IIMLVVSLLAIVLAPLAATLV. Glu227 is a binding site for Zn(2+).

It belongs to the peptidase M48B family. Zn(2+) is required as a cofactor.

The protein resides in the cell membrane. The sequence is that of Protease HtpX homolog from Streptococcus pneumoniae serotype 19F (strain G54).